The chain runs to 480 residues: Uridine 5'-monophosphate synthase (480 aa).

N-acetylalanine is present on alanine 2. Residues 2–214 are OPRTase; sequence AAADALLGSL…AFVAANPNDS (213 aa). Phosphotyrosine is present on tyrosine 37. At serine 214 the chain carries Phosphoserine. Residues 215 to 220 form a domain linker region; it reads LPSVKK. An OMPdecase region spans residues 221 to 480; it reads EPKELSFGAR…WEAYLSRLAV (260 aa). Serine 257 contributes to the orotidine 5'-phosphate binding site. Residues serine 257, aspartate 259, and 281-283 each bind UMP; that span reads KIH. Orotidine 5'-phosphate contacts are provided by residues lysine 281, lysine 314, aspartate 317, threonine 321, serine 372, 430–432, and 450–451; these read QQY and GR. Active-site for OMPdecase activity residues include lysine 314 and aspartate 317. Residues aspartate 317, threonine 321, serine 372, 430-432, and 450-451 contribute to the UMP site; these read QQY and GR.

The protein in the N-terminal section; belongs to the purine/pyrimidine phosphoribosyltransferase family. It in the C-terminal section; belongs to the OMP decarboxylase family. As to quaternary structure, homodimer; dimerization is required for enzymatic activity.

It catalyses the reaction orotidine 5'-phosphate + diphosphate = orotate + 5-phospho-alpha-D-ribose 1-diphosphate. The catalysed reaction is orotidine 5'-phosphate + H(+) = UMP + CO2. It functions in the pathway pyrimidine metabolism; UMP biosynthesis via de novo pathway; UMP from orotate: step 1/2. Its pathway is pyrimidine metabolism; UMP biosynthesis via de novo pathway; UMP from orotate: step 2/2. Bifunctional enzyme catalyzing the last two steps of de novo pyrimidine biosynthesis, orotate phosphoribosyltransferase (OPRT), which converts orotate to orotidine-5'-monophosphate (OMP), and orotidine-5'-monophosphate decarboxylase (ODC), the terminal enzymatic reaction that decarboxylates OMP to uridine monophosphate (UMP). The sequence is that of Uridine 5'-monophosphate synthase (UMPS) from Bos taurus (Bovine).